Reading from the N-terminus, the 56-residue chain is Large ribosomal subunit protein bL33 (56 aa).

Belongs to the bacterial ribosomal protein bL33 family.

In Orientia tsutsugamushi (strain Ikeda) (Rickettsia tsutsugamushi), this protein is Large ribosomal subunit protein bL33.